Consider the following 198-residue polypeptide: HTH-type transcriptional regulator BetI (198 aa).

One can recognise an HTH tetR-type domain in the interval 8-68 (PLRRRELIDA…ATMRHLLREL (61 aa)). Residues 31–50 (TVAQIAHEAGVSPALAHHYF) constitute a DNA-binding region (H-T-H motif).

It functions in the pathway amine and polyamine biosynthesis; betaine biosynthesis via choline pathway [regulation]. In terms of biological role, repressor involved in the biosynthesis of the osmoprotectant glycine betaine. It represses transcription of the choline transporter BetT and the genes of BetAB involved in the synthesis of glycine betaine. The sequence is that of HTH-type transcriptional regulator BetI from Brucella melitensis biotype 2 (strain ATCC 23457).